Reading from the N-terminus, the 642-residue chain is Bifunctional protein glk (642 aa).

The interval 1-340 (MSTGAQSKAA…QLSNRSGGAS (340 aa)) is glucokinase. 23–28 (ADVGGT) is an ATP binding site. Positions 341 to 417 (SAVFERIRQM…LKLATGLTGT (77 aa)) constitute an HTH rpiR-type domain. Positions 341–642 (SAVFERIRQM…SPAAKDVARD (302 aa)) are putative HTH-type transcriptional regulator. A DNA-binding region (H-T-H motif) is located at residues 377–396 (IVDIARKADVSQPTVIRFCR). Residues 461 to 600 (AIEILNGARR…AVGVAIRRAS (140 aa)) enclose the SIS domain. Residues 576-596 (SMISRILHLLMIDILAVGVAI) form a helical membrane-spanning segment.

The protein in the N-terminal section; belongs to the bacterial glucokinase family.

It is found in the membrane. The catalysed reaction is D-glucose + ATP = D-glucose 6-phosphate + ADP + H(+). The sequence is that of Bifunctional protein glk (glk) from Burkholderia lata (strain ATCC 17760 / DSM 23089 / LMG 22485 / NCIMB 9086 / R18194 / 383).